Here is a 440-residue protein sequence, read N- to C-terminus: Rhamnogalacturonase A (440 aa).

The signal sequence occupies residues 1-18 (MRALFLLALGSIPALVSG). A disulfide bridge links C39 with C65. N-linked (GlcNAc...) asparagine glycosylation is present at N50. The active-site Proton donor is D215. The cysteines at positions 217 and 234 are disulfide-linked. H290 is a catalytic residue. A glycan (N-linked (GlcNAc...) asparagine) is linked at N317. 2 disulfides stabilise this stretch: C340–C346 and C368–C377. T385 carries an O-linked (Man) threonine glycan. The O-linked (Man) serine glycan is linked to S386. O-linked (Man) threonine glycans are attached at residues T388, T389, and T390. O-linked (Man) serine glycosylation occurs at S391. O-linked (Man) threonine glycosylation is found at T392 and T394. O-linked (Man) serine glycosylation is found at S398 and S401. 3 O-linked (Man) threonine glycosylation sites follow: T403, T404, and T416. An O-linked (Man) serine glycan is attached at S418. T423 and T426 each carry an O-linked (Man) threonine glycan. O-linked (Man) serine glycans are attached at residues S427 and S436.

It belongs to the glycosyl hydrolase 28 family. Post-translationally, the N-terminus is blocked. In terms of processing, N-glycosylated and may also be O-glycosylated.

The protein resides in the secreted. The enzyme catalyses Endohydrolysis of alpha-D-GalA-(1-&gt;2)-alpha-L-Rha glycosidic bond in the rhamnogalacturonan I backbone with initial inversion of anomeric configuration releasing oligosaccharides with beta-D-GalA at the reducing end.. Functionally, pectinolytic enzymes consist of four classes of enzymes: pectine lyase, polygalacturonase, pectin methylesterase and rhamnogalacturonase. Has a positive effect in the apple hot-mash liquefaction process. Hydrolyzes alpha-D-galacturonopyranosyl-(1,2)-alpha-L-rhamnopyranosyl linkages in the backbone of the hairy regions of pectins. In Aspergillus aculeatus, this protein is Rhamnogalacturonase A (rhgA).